The primary structure comprises 238 residues: 3-dehydroquinate dehydratase (238 aa).

Residues E35–R37 and R70 contribute to the 3-dehydroquinate site. H133 functions as the Proton donor/acceptor in the catalytic mechanism. Catalysis depends on K160, which acts as the Schiff-base intermediate with substrate. 3-dehydroquinate-binding residues include R202 and Q225.

Belongs to the type-I 3-dehydroquinase family. As to quaternary structure, homodimer.

It catalyses the reaction 3-dehydroquinate = 3-dehydroshikimate + H2O. Its pathway is metabolic intermediate biosynthesis; chorismate biosynthesis; chorismate from D-erythrose 4-phosphate and phosphoenolpyruvate: step 3/7. Involved in the third step of the chorismate pathway, which leads to the biosynthesis of aromatic amino acids. Catalyzes the cis-dehydration of 3-dehydroquinate (DHQ) and introduces the first double bond of the aromatic ring to yield 3-dehydroshikimate. The protein is 3-dehydroquinate dehydratase of Staphylococcus aureus (strain USA300).